The sequence spans 812 residues: MPTGYHNFCDDELDESINFNYNRKPSQPKDYDDDSRTSGRTTPKRARGGRGRGSGDRGGRGGSRGRGGNGGSSRGGKKNGWRDEKPSLLSSILNSRQHASENREHMFNKSLRGAEFITFIKSAEVYDPSKLLKDVGVTVEEANVVNEVEDIHIIVPEVIPEVQDVTGADAQLEDQESEDEEVVTTITETYADDGDNQEDDDDEMLVDGNGQLVDDYDDDEDDDDEDDEIDEEVDDDLIADENAVDVSTLQDAINEVANDTINDDRKEEDPSEGSEADDEEDEAAEFVMDTEGDPDMVDMEFMETDFAYLNKKKRAEKSRTPLTSSTAVISDRPVASVSADTTLVGSVASKKRHNADPRAVDIPEYNSDIDPEVLKDYIESIKNEDEGSDAENIDWIRSALGTQLGGTEQYYVDSDDSENDDFDDDDEDDEEEYEWPENGTVGCIRNIVATRAASQGYQFMVEHTLDADMEEWWNEDLIRDSVAEHLGVSVSELPDEAYRWYVTRLGGDIEDPDLSEEGINYSDYYDDSDEDEKAREASEMDSLIQSLIDDEVDDRKALMDHGYTPPMTKSRGKNQVPNFGVNDPELQAQLEKHWVNSRAAKRAKREQRQAMRKQGMFTKEFKQGGIIPLHAKYPILMTVEEARKEIEIFINAPNKPMVLDFPPMGAEFRSVLKKLSACYHLKPDIHGVQKSKHVSMLRTSRTSCHNNNYIQKFHDKFPKKFKLVIRNAKYSTEQYLYETKHQKGSKRSAVRVHNREGEIVGHEAPAIDDSNIGRLLLQKMGWTTGEGLGAQSRGISEPIIAKVKISKRGIGA.

4 disordered regions span residues isoleucine 17–glutamate 101, glutamate 188–alanine 284, glutamine 409–tryptophan 435, and aspartate 511–methionine 540. Basic and acidic residues predominate over residues glutamine 27–threonine 37. Residues arginine 60–arginine 74 show a composition bias toward gly residues. Over residues leucine 88 to glutamine 97 the composition is skewed to polar residues. Acidic residues-rich tracts occupy residues tyrosine 190–leucine 205, aspartate 214–alanine 243, aspartate 269–alanine 284, and aspartate 413–tryptophan 435. In terms of domain architecture, R3H spans leucine 636 to serine 700. In terms of domain architecture, G-patch spans aspartate 769–alanine 812.

It belongs to the SQS1 family.

It localises to the cytoplasm. It is found in the nucleus. In terms of biological role, may be involved in splicing. In Yarrowia lipolytica (strain CLIB 122 / E 150) (Yeast), this protein is Protein SQS1 (SQS1).